The chain runs to 366 residues: MRVMAPRTLILPLSGALALTETWAGSHSMRYFYTSVSRPGRGEPRFISVGYVDDTQFVRFDSDAASPRGEPRAPWVEQEGPEYWDRETQKYKRQAQTDRVNLRKLRGYYNQSEDGSHTLQSMYGCDLGPDGRLLRGYSQFAYDGKDYIALNEDLRSWTAADTAAQVTQRKWEAARVAEQERAYLEGLCVEWLRRYLENGKETLQRAEPPKTHVTHHPLSDHEATLRCWALGFYPAEITLTWQRDGEDQTQDTELVETRPAGDGTFQKWAAVVVPSGQEQRYTCHMQHEGLPEPLTLRWEPSSQPTIPIVGIVVGLAVLVVLAVLGAVVTAMMCRRKSSGGKGGSCSQAACSNSAQGSDESLITCKA.

An N-terminal signal peptide occupies residues 1-24 (MRVMAPRTLILPLSGALALTETWA). The tract at residues 25–114 (GSHSMRYFYT…LRGYYNQSED (90 aa)) is alpha-1. Residues 25 to 308 (GSHSMRYFYT…EPSSQPTIPI (284 aa)) lie on the Extracellular side of the membrane. N-linked (GlcNAc...) asparagine glycosylation occurs at asparagine 110. The alpha-2 stretch occupies residues 115-206 (GSHTLQSMYG…ENGKETLQRA (92 aa)). 2 disulfides stabilise this stretch: cysteine 125/cysteine 188 and cysteine 227/cysteine 283. The interval 207 to 298 (EPPKTHVTHH…GLPEPLTLRW (92 aa)) is alpha-3. Residues 209-297 (PKTHVTHHPL…EGLPEPLTLR (89 aa)) form the Ig-like C1-type domain. Positions 299 to 308 (EPSSQPTIPI) are connecting peptide. A helical transmembrane segment spans residues 309–333 (VGIVVGLAVLVVLAVLGAVVTAMMC). The Cytoplasmic segment spans residues 334–366 (RRKSSGGKGGSCSQAACSNSAQGSDESLITCKA).

This sequence belongs to the MHC class I family. In terms of assembly, heterodimer of an alpha chain and a beta chain (beta-2-microglobulin).

The protein localises to the membrane. Involved in the presentation of foreign antigens to the immune system. This is Class I histocompatibility antigen, Gogo-C*0201 alpha chain from Gorilla gorilla gorilla (Western lowland gorilla).